A 144-amino-acid polypeptide reads, in one-letter code: UPF0735 ACT domain-containing protein NT01CX_1681 (144 aa).

The 76-residue stretch at 68-143 (TIGFLLSHKA…NVVKVSLIAM (76 aa)) folds into the ACT domain.

It belongs to the UPF0735 family.

This Clostridium novyi (strain NT) protein is UPF0735 ACT domain-containing protein NT01CX_1681.